We begin with the raw amino-acid sequence, 191 residues long: Protein GrpE (191 aa).

Residues M1 to A10 show a composition bias toward basic and acidic residues. The tract at residues M1 to V28 is disordered.

Belongs to the GrpE family. In terms of assembly, homodimer.

Its subcellular location is the cytoplasm. Participates actively in the response to hyperosmotic and heat shock by preventing the aggregation of stress-denatured proteins, in association with DnaK and GrpE. It is the nucleotide exchange factor for DnaK and may function as a thermosensor. Unfolded proteins bind initially to DnaJ; upon interaction with the DnaJ-bound protein, DnaK hydrolyzes its bound ATP, resulting in the formation of a stable complex. GrpE releases ADP from DnaK; ATP binding to DnaK triggers the release of the substrate protein, thus completing the reaction cycle. Several rounds of ATP-dependent interactions between DnaJ, DnaK and GrpE are required for fully efficient folding. The chain is Protein GrpE from Aeromonas hydrophila subsp. hydrophila (strain ATCC 7966 / DSM 30187 / BCRC 13018 / CCUG 14551 / JCM 1027 / KCTC 2358 / NCIMB 9240 / NCTC 8049).